The following is a 131-amino-acid chain: Peptide methionine sulfoxide reductase MsrB (131 aa).

Positions 8 to 130 constitute a MsrB domain; it reads LEEWRAMLDP…NSVCLDLKPR (123 aa). The Zn(2+) site is built by C47, C50, C96, and C99. C119 functions as the Nucleophile in the catalytic mechanism.

It belongs to the MsrB Met sulfoxide reductase family. The cofactor is Zn(2+).

It carries out the reaction L-methionyl-[protein] + [thioredoxin]-disulfide + H2O = L-methionyl-(R)-S-oxide-[protein] + [thioredoxin]-dithiol. This chain is Peptide methionine sulfoxide reductase MsrB, found in Pseudomonas entomophila (strain L48).